Here is a 214-residue protein sequence, read N- to C-terminus: tRNA (guanine-N(7)-)-methyltransferase (214 aa).

S-adenosyl-L-methionine contacts are provided by Glu-43, Glu-68, Asn-99, and Asp-121. Asp-121 is a catalytic residue. Substrate is bound by residues Lys-125, Asp-157, and 194–197 (TEYE).

The protein belongs to the class I-like SAM-binding methyltransferase superfamily. TrmB family.

The enzyme catalyses guanosine(46) in tRNA + S-adenosyl-L-methionine = N(7)-methylguanosine(46) in tRNA + S-adenosyl-L-homocysteine. The protein operates within tRNA modification; N(7)-methylguanine-tRNA biosynthesis. Catalyzes the formation of N(7)-methylguanine at position 46 (m7G46) in tRNA. This chain is tRNA (guanine-N(7)-)-methyltransferase, found in Alkaliphilus metalliredigens (strain QYMF).